A 420-amino-acid polypeptide reads, in one-letter code: Glutamyl-tRNA reductase (420 aa).

Substrate is bound by residues 49-52 (TCNR), S107, 112-114 (EPQ), and Q118. The active-site Nucleophile is the C50. 187 to 192 (GAGETI) provides a ligand contact to NADP(+).

The protein belongs to the glutamyl-tRNA reductase family. As to quaternary structure, homodimer.

The catalysed reaction is (S)-4-amino-5-oxopentanoate + tRNA(Glu) + NADP(+) = L-glutamyl-tRNA(Glu) + NADPH + H(+). Its pathway is porphyrin-containing compound metabolism; protoporphyrin-IX biosynthesis; 5-aminolevulinate from L-glutamyl-tRNA(Glu): step 1/2. In terms of biological role, catalyzes the NADPH-dependent reduction of glutamyl-tRNA(Glu) to glutamate 1-semialdehyde (GSA). This chain is Glutamyl-tRNA reductase, found in Nitrosococcus oceani (strain ATCC 19707 / BCRC 17464 / JCM 30415 / NCIMB 11848 / C-107).